Consider the following 428-residue polypeptide: GTPase Obg (428 aa).

An Obg domain is found at 1-158 (MFVDQVKIYV…RDVILELKVL (158 aa)). The OBG-type G domain occupies 159-329 (ADVGLVGFPS…LLFEVANLIE (171 aa)). Residues 165 to 172 (GFPSVGKS), 190 to 194 (FTTIV), 212 to 215 (DLPG), 282 to 285 (NKMD), and 310 to 312 (SAV) each bind GTP. Mg(2+)-binding residues include Ser172 and Thr192. The region spanning 350-428 (KFETEGVKFD…ILEYEFEFID (79 aa)) is the OCT domain.

This sequence belongs to the TRAFAC class OBG-HflX-like GTPase superfamily. OBG GTPase family. As to quaternary structure, monomer. Requires Mg(2+) as cofactor.

It localises to the cytoplasm. Its function is as follows. An essential GTPase which binds GTP, GDP and possibly (p)ppGpp with moderate affinity, with high nucleotide exchange rates and a fairly low GTP hydrolysis rate. Plays a role in control of the cell cycle, stress response, ribosome biogenesis and in those bacteria that undergo differentiation, in morphogenesis control. The protein is GTPase Obg of Bacillus cereus (strain AH820).